A 188-amino-acid polypeptide reads, in one-letter code: Elongation factor P-like protein (188 aa).

The protein belongs to the elongation factor P family.

The chain is Elongation factor P-like protein from Xanthomonas axonopodis pv. citri (strain 306).